A 171-amino-acid chain; its full sequence is Large ribosomal subunit protein uL10 (171 aa).

This sequence belongs to the universal ribosomal protein uL10 family. As to quaternary structure, part of the ribosomal stalk of the 50S ribosomal subunit. The N-terminus interacts with L11 and the large rRNA to form the base of the stalk. The C-terminus forms an elongated spine to which L12 dimers bind in a sequential fashion forming a multimeric L10(L12)X complex.

Forms part of the ribosomal stalk, playing a central role in the interaction of the ribosome with GTP-bound translation factors. The protein is Large ribosomal subunit protein uL10 of Phenylobacterium zucineum (strain HLK1).